We begin with the raw amino-acid sequence, 420 residues long: MMELRVLLLLLLLTLLGAMGSLCLANSDTQAKGAHSNNMTIKTFRIFDDSESEFEEIPWDELDESGEGSGDQAPVSRSARKPIRRNITKEAEQYLSSQWLTKFVPSLYTVVFIVGLPLNLLAIIIFLFKMKVRKPAVVYMLNLAIADVFFVSVLPFKIAYHLSGNDWLFGPGMCRIVTAIFYCNMYCSVLLIASISVDRFLAVVYPMHSLSWRTMSRAYMACSFIWLISIASTIPLLVTEQTQKIPRLDITTCHDVLDLKDLKDFYIYYFSSFCLLFFFVPFIITTICYIGIIRSLSSSSIENSCKKTRALFLAVVVLCVFIICFGPTNVLFLTHYLQEANEFLYFAYILSACVGSVSCCLDPLIYYYASSQCQRYLYSLLCCRKVSEPGSSTGQLMSTAMKNDNCSTNAKSSIYKKLLA.

A signal peptide spans 1–20 (MMELRVLLLLLLLTLLGAMG). Positions 21–42 (SLCLANSDTQAKGAHSNNMTIK) are cleaved as a propeptide — removed for receptor activation. N-linked (GlcNAc...) asparagine glycosylation is present at N38. Residues 43–101 (TFRIFDDSESEFEEIPWDELDESGEGSGDQAPVSRSARKPIRRNITKEAEQYLSSQWLT) lie on the Extracellular side of the membrane. The tract at residues 61-80 (ELDESGEGSGDQAPVSRSAR) is disordered. The N-linked (GlcNAc...) asparagine glycan is linked to N86. The helical transmembrane segment at 102–127 (KFVPSLYTVVFIVGLPLNLLAIIIFL) threads the bilayer. Residues 128 to 136 (FKMKVRKPA) lie on the Cytoplasmic side of the membrane. A helical membrane pass occupies residues 137 to 156 (VVYMLNLAIADVFFVSVLPF). At 157 to 175 (KIAYHLSGNDWLFGPGMCR) the chain is on the extracellular side. The cysteines at positions 174 and 253 are disulfide-linked. The chain crosses the membrane as a helical span at residues 176 to 197 (IVTAIFYCNMYCSVLLIASISV). Topologically, residues 198-217 (DRFLAVVYPMHSLSWRTMSR) are cytoplasmic. A helical membrane pass occupies residues 218-238 (AYMACSFIWLISIASTIPLLV). The Extracellular portion of the chain corresponds to 239 to 267 (TEQTQKIPRLDITTCHDVLDLKDLKDFYI). Residues 268 to 287 (YYFSSFCLLFFFVPFIITTI) traverse the membrane as a helical segment. Residues 288–310 (CYIGIIRSLSSSSIENSCKKTRA) lie on the Cytoplasmic side of the membrane. The helical transmembrane segment at 311–333 (LFLAVVVLCVFIICFGPTNVLFL) threads the bilayer. Residues 334-345 (THYLQEANEFLY) are Extracellular-facing. The helical transmembrane segment at 346–369 (FAYILSACVGSVSCCLDPLIYYYA) threads the bilayer. Over 370–420 (SSQCQRYLYSLLCCRKVSEPGSSTGQLMSTAMKNDNCSTNAKSSIYKKLLA) the chain is Cytoplasmic.

This sequence belongs to the G-protein coupled receptor 1 family. In terms of processing, proteolytic cleavage generates a new N-terminus that functions as a tethered ligand.

The protein resides in the cell membrane. High affinity receptor that binds the activated thrombin, leading to calcium release from intracellular stores. The thrombin-activated receptor signaling pathway is mediated through PTX-insensitive G proteins, activation of phospholipase C resulting in the production of 1D-myo-inositol 1,4,5-trisphosphate (InsP3) which binds to InsP3 receptors causing calcium release from the stores. This Xenopus laevis (African clawed frog) protein is Proteinase-activated receptor 1.